The chain runs to 437 residues: Sorting nexin-30 (437 aa).

2 disordered regions span residues 1–44 and 54–73; these read MAGG…PDLL and LILPNGGTPAGTSSPASSSS. T38 is modified (phosphothreonine). S40 carries the post-translational modification Phosphoserine. The segment covering 63–73 has biased composition (low complexity); sequence AGTSSPASSSS. A PX domain is found at 89-210; it reads RDLFVIVDDP…IFLTAKDLNA (122 aa). Residues R132, Q134, K162, and R176 each contribute to the a 1,2-diacyl-sn-glycero-3-phospho-(1D-myo-inositol-3-phosphate) site. The BAR domain occupies 234-437; the sequence is KLRTRPLEFA…PLLQEKQEAK (204 aa).

The protein belongs to the sorting nexin family. As to quaternary structure, heterodimer; heterodimerizes with SNX4.

It localises to the early endosome membrane. Functionally, involved in the regulation of endocytosis and in several stages of intracellular trafficking. Together with SNX4, involved in autophagosome assembly. This Homo sapiens (Human) protein is Sorting nexin-30.